A 373-amino-acid chain; its full sequence is Putative citrate synthase 2 (373 aa).

Residues His250 and Glu303 contribute to the active site.

This sequence belongs to the citrate synthase family.

It carries out the reaction oxaloacetate + acetyl-CoA + H2O = citrate + CoA + H(+). It functions in the pathway carbohydrate metabolism; tricarboxylic acid cycle; isocitrate from oxaloacetate: step 1/2. The sequence is that of Putative citrate synthase 2 (citA) from Mycobacterium bovis (strain ATCC BAA-935 / AF2122/97).